The chain runs to 353 residues: Thiamine thiazole synthase 1, chloroplastic (353 aa).

The transit peptide at 1-48 (MATLTSSICSKPKASVFDPHKSSFHGVPIATQARLSPVKSTPVNLAVT) directs the protein to the chloroplast. Substrate-binding positions include Ala-97, 117 to 118 (EQ), Gly-125, and Ala-190. Position 219 is a 2,3-didehydroalanine (Cys) (Cys-219). Residues Asp-221, His-236, Met-288, and 298-300 (RMG) contribute to the substrate site.

The protein belongs to the THI4 family. Homooctamer. Fe cation is required as a cofactor. Post-translationally, during the catalytic reaction, a sulfide is transferred from Cys-219 to a reaction intermediate, generating a dehydroalanine residue.

It is found in the plastid. It localises to the chloroplast. It catalyses the reaction [ADP-thiazole synthase]-L-cysteine + glycine + NAD(+) = [ADP-thiazole synthase]-dehydroalanine + ADP-5-ethyl-4-methylthiazole-2-carboxylate + nicotinamide + 3 H2O + 2 H(+). Functionally, involved in biosynthesis of the thiamine precursor thiazole. Catalyzes the conversion of NAD and glycine to adenosine diphosphate 5-(2-hydroxyethyl)-4-methylthiazole-2-carboxylic acid (ADT), an adenylated thiazole intermediate. The reaction includes an iron-dependent sulfide transfer from a conserved cysteine residue of the protein to a thiazole intermediate. The enzyme can only undergo a single turnover, which suggests it is a suicide enzyme. May have additional roles in adaptation to various stress conditions and in DNA damage tolerance. In Vitis vinifera (Grape), this protein is Thiamine thiazole synthase 1, chloroplastic.